Consider the following 318-residue polypeptide: MTTVPVTDIQNDLITEFSEDNYPSNKNYEITLRQMSILTHVNNVVDREHNAAVVSSPEEISSQLNEDLFPDDDSPATIIERVQPHTTIIDDTPPPTFRRELLISEQRQQREKRFNITVSKNAEAIMESRSMISSMPTQTPSLGVVYDKDKRIQMLEDEVVNLRNQRSNTKSSDNLDNFTRILFGKTPYKSTEVNKRIAIVNYANLNGSPLSVEDLDVCSEDEIDRIYKTIKQYHESRKRKIIVTNVIIIVINIIEQALLKLGFEEIKGLSTDITSEIIDVEIGDDCDAVASKLGIGNSPVLNIVLFILKIFVKRIKII.

Positions 145–172 (VYDKDKRIQMLEDEVVNLRNQRSNTKSS) form a coiled coil.

Belongs to the orthopoxvirus OPG137 family. In terms of assembly, homomultimer. Interacts with OPG160. Post-translationally, phosphorylated by a OPG054-independent mechanism.

The protein localises to the host cytoplasm. Required for viral crescent formation early during virus morphogenesis. The chain is Protein OPG137 (OPG137) from Vaccinia virus (strain Ankara) (VACV).